Here is a 161-residue protein sequence, read N- to C-terminus: Phosphopantetheine adenylyltransferase (161 aa).

Ser11 is a binding site for substrate. Residues 11–12 (SF) and His19 contribute to the ATP site. Lys43, Leu75, and Arg89 together coordinate substrate. Residues 90 to 92 (GLR), Glu100, and 125 to 131 (YSFISSS) contribute to the ATP site.

Belongs to the bacterial CoaD family. Homohexamer. Mg(2+) serves as cofactor.

The protein resides in the cytoplasm. It carries out the reaction (R)-4'-phosphopantetheine + ATP + H(+) = 3'-dephospho-CoA + diphosphate. It functions in the pathway cofactor biosynthesis; coenzyme A biosynthesis; CoA from (R)-pantothenate: step 4/5. Reversibly transfers an adenylyl group from ATP to 4'-phosphopantetheine, yielding dephospho-CoA (dPCoA) and pyrophosphate. The sequence is that of Phosphopantetheine adenylyltransferase from Staphylococcus epidermidis (strain ATCC 35984 / DSM 28319 / BCRC 17069 / CCUG 31568 / BM 3577 / RP62A).